A 707-amino-acid chain; its full sequence is DNA ligase (707 aa).

NAD(+) is bound by residues 48 to 52 (DAEYD), 97 to 98 (SI), and E134. Residue K136 is the N6-AMP-lysine intermediate of the active site. 4 residues coordinate NAD(+): R157, E193, K320, and K344. Zn(2+) contacts are provided by C438, C441, C456, and C462. A BRCT domain is found at 621–707 (VAPKPLSGKT…DSPPDERIPA (87 aa)).

This sequence belongs to the NAD-dependent DNA ligase family. LigA subfamily. It depends on Mg(2+) as a cofactor. The cofactor is Mn(2+).

It carries out the reaction NAD(+) + (deoxyribonucleotide)n-3'-hydroxyl + 5'-phospho-(deoxyribonucleotide)m = (deoxyribonucleotide)n+m + AMP + beta-nicotinamide D-nucleotide.. Its function is as follows. DNA ligase that catalyzes the formation of phosphodiester linkages between 5'-phosphoryl and 3'-hydroxyl groups in double-stranded DNA using NAD as a coenzyme and as the energy source for the reaction. It is essential for DNA replication and repair of damaged DNA. The sequence is that of DNA ligase from Polaromonas naphthalenivorans (strain CJ2).